The chain runs to 376 residues: NADPH oxidase organizer 1 (376 aa).

In terms of domain architecture, PX spans 1-131 (MAGPRYPVSV…GFFAPQPLDL (131 aa)). SH3 domains follow at residues 163-225 (LEAQ…EAAP) and 237-296 (SSGP…PEGL). The segment at 302–376 (GTGFRGGDDP…DSVPHPTTEQ (75 aa)) is disordered. Positions 326–335 (APPPTVPTRP) are enriched in pro residues. The tract at residues 328–337 (PPTVPTRPSP) is proline-rich region; mediates mutually exclusive interactions with itself and NOXA1.

Interacts with NOX1, NOXA1, CYBA/p22phox and NCF2/p67phox. Interacts with SH3PXD2A and SH3PXD2B. In terms of tissue distribution, expressed in testis, small and large intestines, liver, kidney and pancreas. Isoform 3 is mainly expressed in colon. Isoform 1 is preferentially expressed in testis.

The protein localises to the cell membrane. Functionally, constitutively potentiates the superoxide-generating activity of NOX1 and NOX3 and is required for the biogenesis of otoconia/otolith, which are crystalline structures of the inner ear involved in the perception of gravity. Isoform 3 is more potent than isoform 1 in activating NOX3. Together with NOXA1, may also substitute to NCF1/p47phox and NCF2/p67phox in supporting the phagocyte NOX2/gp91phox superoxide-generating activity. The chain is NADPH oxidase organizer 1 (NOXO1) from Homo sapiens (Human).